A 217-amino-acid chain; its full sequence is MLDISIAIDGPAGAGKSTIAKIIGNKLNIMYINTGSMYRAVTLMALKNNIEPYDIESLKALINSMNISFNGNNIIVNGKDLEEDIRMPIINNNVSKYAAVEEVRELLVSMQQNISKKYNVVMDGRDIGTVVLKDAPYKFFITASAEVRAKRRLKELKEKGININFRDVLKEIKERDYIDSNRKVNPLKQSKDAILIDTSNFTIEEVVDKICTIIKKD.

10–18 (GPAGAGKST) provides a ligand contact to ATP.

The protein belongs to the cytidylate kinase family. Type 1 subfamily.

It is found in the cytoplasm. It carries out the reaction CMP + ATP = CDP + ADP. The enzyme catalyses dCMP + ATP = dCDP + ADP. In Clostridium botulinum (strain ATCC 19397 / Type A), this protein is Cytidylate kinase.